Reading from the N-terminus, the 199-residue chain is Melanocortin-2 receptor accessory protein 2B (199 aa).

Asn6 carries N-linked (GlcNAc...) asparagine glycosylation. Residues 39 to 59 (IVIGFWVGLAVFVIFMFFVLT) traverse the membrane as a helical segment.

Belongs to the MRAP family. In terms of assembly, interacts with mc4r. As to expression, expressed in adult brain.

It is found in the cell membrane. It localises to the endoplasmic reticulum membrane. Its function is as follows. Activator of melanocortin receptor 4 (mc4r), a receptor involved in energy homeostasis. Plays a role after larval development in the control of energy homeostasis and body weight regulation by increasing ligand-sensitivity of mc4r and mc4r-mediated generation of cAMP once the zebrafish begins feeding, increasing the capacity for regulated feeding and growth. The polypeptide is Melanocortin-2 receptor accessory protein 2B (mrap2b) (Danio rerio (Zebrafish)).